The chain runs to 340 residues: Glycerol-3-phosphate dehydrogenase [NAD(P)+] (340 aa).

NADPH is bound by residues serine 14, phenylalanine 15, arginine 35, and lysine 108. The sn-glycerol 3-phosphate site is built by lysine 108 and glycine 136. Residue alanine 140 coordinates NADPH. Lysine 191, aspartate 244, serine 254, arginine 255, and asparagine 256 together coordinate sn-glycerol 3-phosphate. The active-site Proton acceptor is the lysine 191. Arginine 255 is an NADPH binding site. Glutamate 281 provides a ligand contact to NADPH.

This sequence belongs to the NAD-dependent glycerol-3-phosphate dehydrogenase family.

The protein localises to the cytoplasm. The enzyme catalyses sn-glycerol 3-phosphate + NAD(+) = dihydroxyacetone phosphate + NADH + H(+). The catalysed reaction is sn-glycerol 3-phosphate + NADP(+) = dihydroxyacetone phosphate + NADPH + H(+). The protein operates within membrane lipid metabolism; glycerophospholipid metabolism. Catalyzes the reduction of the glycolytic intermediate dihydroxyacetone phosphate (DHAP) to sn-glycerol 3-phosphate (G3P), the key precursor for phospholipid synthesis. In Pseudomonas paraeruginosa (strain DSM 24068 / PA7) (Pseudomonas aeruginosa (strain PA7)), this protein is Glycerol-3-phosphate dehydrogenase [NAD(P)+].